The chain runs to 144 residues: Probable 4-amino-4-deoxy-L-arabinose-phosphoundecaprenol flippase subunit ArnF (144 aa).

The Cytoplasmic segment spans residues 1–6 (MTHRRA). A helical transmembrane segment spans residues 7-24 (TLCAMASVALVSAAQLGM). Over 25–56 (RWSMSRLPSPVQWLEMQEHAQLDLSALRVVCA) the chain is Periplasmic. The chain crosses the membrane as a helical span at residues 57 to 77 (SITAYALSMLFWLLALRVLPL). Residues 78 to 80 (SRA) lie on the Cytoplasmic side of the membrane. The helical transmembrane segment at 81 to 101 (YSLLSISYALVYTLAATLPFF) threads the bilayer. Over 102 to 104 (HET) the chain is Periplasmic. Residues 105–125 (FTVSKTVGVSLIVAGVLTINL) traverse the membrane as a helical segment. The Cytoplasmic portion of the chain corresponds to 126-144 (RRLPRPSPQDLSHENQRFR).

The protein belongs to the ArnF family. As to quaternary structure, heterodimer of ArnE and ArnF.

Its subcellular location is the cell inner membrane. The protein operates within bacterial outer membrane biogenesis; lipopolysaccharide biosynthesis. Its function is as follows. Translocates 4-amino-4-deoxy-L-arabinose-phosphoundecaprenol (alpha-L-Ara4N-phosphoundecaprenol) from the cytoplasmic to the periplasmic side of the inner membrane. The sequence is that of Probable 4-amino-4-deoxy-L-arabinose-phosphoundecaprenol flippase subunit ArnF from Pseudomonas syringae pv. syringae (strain B728a).